The following is a 311-amino-acid chain: Energy-coupling factor transporter ATP-binding protein EcfA2 (311 aa).

One can recognise an ABC transporter domain in the interval 3–265 (IKLKDVKFTF…IAFLEENNLQ (263 aa)). Position 40-47 (40-47 (GQTGSGKT)) interacts with ATP.

This sequence belongs to the ABC transporter superfamily. Energy-coupling factor EcfA family. As to quaternary structure, forms a stable energy-coupling factor (ECF) transporter complex composed of 2 membrane-embedded substrate-binding proteins (S component), 2 ATP-binding proteins (A component) and 2 transmembrane proteins (T component).

Its subcellular location is the cell membrane. Its function is as follows. ATP-binding (A) component of a common energy-coupling factor (ECF) ABC-transporter complex. Unlike classic ABC transporters this ECF transporter provides the energy necessary to transport a number of different substrates. This Mycoplasmopsis synoviae (strain 53) (Mycoplasma synoviae) protein is Energy-coupling factor transporter ATP-binding protein EcfA2.